Here is a 290-residue protein sequence, read N- to C-terminus: Outer dense fiber protein 4 (290 aa).

S28 is subject to Phosphoserine. The next 4 membrane-spanning stretches (helical) occupy residues 44–64 (AQVV…LMVF), 132–152 (ISFI…HLPY), 164–184 (LIGI…LLLF), and 201–221 (IGWS…CGIL). Positions 262–290 (ADILDPTQDDQKPLSSDNIALPPNPDTTD) are disordered.

It localises to the membrane. Its function is as follows. Component of the outer dense fibers (ODF) of spermatozoa which could be involved in sperm tail structure, sperm movement and general organization of cellular cytoskeleton. The polypeptide is Outer dense fiber protein 4 (Odf4) (Rattus norvegicus (Rat)).